Here is a 265-residue protein sequence, read N- to C-terminus: Shikimate dehydrogenase (NADP(+)) (265 aa).

Shikimate-binding positions include Ser15–Ser17 and Thr62. The active-site Proton acceptor is the Lys66. Glu78 lines the NADP(+) pocket. Shikimate contacts are provided by Asn87 and Asp102. NADP(+) is bound by residues Gly126–Val130, Asn150–Lys155, and Val210. Shikimate is bound at residue Tyr212. Gly233 contacts NADP(+).

Belongs to the shikimate dehydrogenase family. As to quaternary structure, homodimer.

The catalysed reaction is shikimate + NADP(+) = 3-dehydroshikimate + NADPH + H(+). Its pathway is metabolic intermediate biosynthesis; chorismate biosynthesis; chorismate from D-erythrose 4-phosphate and phosphoenolpyruvate: step 4/7. Functionally, involved in the biosynthesis of the chorismate, which leads to the biosynthesis of aromatic amino acids. Catalyzes the reversible NADPH linked reduction of 3-dehydroshikimate (DHSA) to yield shikimate (SA). In Pelagibacter ubique (strain HTCC1062), this protein is Shikimate dehydrogenase (NADP(+)).